The primary structure comprises 198 residues: GTP cyclohydrolase 1 (198 aa).

The Zn(2+) site is built by cysteine 87, histidine 90, and cysteine 158.

Belongs to the GTP cyclohydrolase I family. In terms of assembly, homomer.

It carries out the reaction GTP + H2O = 7,8-dihydroneopterin 3'-triphosphate + formate + H(+). It functions in the pathway cofactor biosynthesis; 7,8-dihydroneopterin triphosphate biosynthesis; 7,8-dihydroneopterin triphosphate from GTP: step 1/1. In Janthinobacterium sp. (strain Marseille) (Minibacterium massiliensis), this protein is GTP cyclohydrolase 1.